The sequence spans 86 residues: Large ribosomal subunit protein bL31B (86 aa).

This sequence belongs to the bacterial ribosomal protein bL31 family. Type B subfamily. In terms of assembly, part of the 50S ribosomal subunit.

This is Large ribosomal subunit protein bL31B from Cupriavidus necator (strain ATCC 17699 / DSM 428 / KCTC 22496 / NCIMB 10442 / H16 / Stanier 337) (Ralstonia eutropha).